A 600-amino-acid polypeptide reads, in one-letter code: MVQDSAFLAKLMKSADTFELKYDFSCELYRLSTYSAFPRGVPVSERSLARAGFYYTGANDKVKCFCCGLMLDNWKQGDSPMEKHRKLYPSCNFVQTLNPANSLEASPRPSLPSTAMSTMPLSFASSENTGYFSGSYSSFPSDPVNFRANQDCPALSTSPYHFAMNTEKARLLTYETWPLSFLSPAKLAKAGFYYIGPGDRVACFACDGKLSNWERKDDAMSEHQRHFPSCPFLKDLGQSASRYTVSNLSMQTHAARIRTFSNWPSSALVHSQELASAGFYYTGHSDDVKCFCCDGGLRCWESGDDPWVEHAKWFPRCEYLLRIKGQEFVSQVQAGYPHLLEQLLSTSDSPEDENADAAIVHFGPGESSEDVVMMSTPVVKAALEMGFSRSLVRQTVQWQILATGENYRTVSDLVIGLLDAEDEMREEQMEQAAEEEESDDLALIRKNKMVLFQHLTCVTPMLYCLLSARAITEQECNAVKQKPHTLQASTLIDTVLAKGNTAATSFRNSLREIDPALYRDIFVQQDIRSLPTDDIAALPMEEQLRKLQEERMCKVCMDREVSIVFIPCGHLVVCKDCAPSLRKCPICRGTIKGTVRTFLS.

Residues 27 to 94 (ELYRLSTYSA…RKLYPSCNFV (68 aa)) form a BIR 1 repeat. Residue S138 is modified to Phosphoserine. 2 BIR repeats span residues 167–233 (EKAR…CPFL) and 253–320 (HAAR…CEYL). The Zn(2+) site is built by C290, C293, H310, and C317. The 90-residue stretch at 436–525 (EESDDLALIR…ALYRDIFVQQ (90 aa)) folds into the CARD domain. Residues 553–588 (CKVCMDREVSIVFIPCGHLVVCKDCAPSLRKCPICR) form an RING-type zinc finger.

Belongs to the IAP family. As to quaternary structure, interacts with PRSS25; the interaction inhibits apoptotic suppressor activity. The BIR motifs region interacts with TNF receptor associated factors 1 and 2 (TRAF1 and TRAF2) to form a heteromeric complex, which is then recruited to the tumor necrosis factor receptor 2 (TNFR2). Interaction with TRAF2 is required for ubiquitination of IKBKE, degradation of NFKBIA and activation of NF-kappa-B. Interacts with RIP1, RIP2, RIP3, RIP4 and USP19. Post-translationally, auto-ubiquitinated and degraded by the proteasome in apoptotic cells.

Its subcellular location is the cytoplasm. It is found in the nucleus. It carries out the reaction S-ubiquitinyl-[E2 ubiquitin-conjugating enzyme]-L-cysteine + [acceptor protein]-L-lysine = [E2 ubiquitin-conjugating enzyme]-L-cysteine + N(6)-ubiquitinyl-[acceptor protein]-L-lysine.. With respect to regulation, USP19 regulates the stability of BIRC3/c-IAP2 by preventing its ubiquitination. Multi-functional protein which regulates not only caspases and apoptosis, but also modulates inflammatory signaling and immunity, mitogenic kinase signaling and cell proliferation, as well as cell invasion and metastasis. Acts as an E3 ubiquitin-protein ligase regulating NF-kappa-B signaling and regulates both canonical and non-canonical NF-kappa-B signaling by acting in opposite directions: acts as a positive regulator of the canonical pathway and suppresses constitutive activation of non-canonical NF-kappa-B signaling. The target proteins for its E3 ubiquitin-protein ligase activity include: RIPK1, RIPK2, RIPK3, RIPK4, CASP3, CASP7, CASP8, IKBKE, TRAF1, and BCL10. Acts as an important regulator of innate immune signaling via regulation of Toll-like receptors (TLRs), Nodlike receptors (NLRs) and RIG-I like receptors (RLRs), collectively referred to as pattern recognition receptors (PRRs). Protects cells from spontaneous formation of the ripoptosome, a large multi-protein complex that has the capability to kill cancer cells in a caspase-dependent and caspase-independent manner. Suppresses ripoptosome formation by ubiquitinating RIPK1 and CASP8. The polypeptide is Baculoviral IAP repeat-containing protein 3 (Birc3) (Mus musculus (Mouse)).